We begin with the raw amino-acid sequence, 298 residues long: Cytochrome c oxidase subunit 2 (298 aa).

The signal sequence occupies residues 1 to 29; the sequence is MMAIATKRRGVAAVMSLGVATMTAVPALA. A Pyrrolidone carboxylic acid modification is found at Gln30. Over 30–55 the chain is Periplasmic; it reads QDVLGDLPVIGKPVNGGMNFQPASSP. A helical membrane pass occupies residues 56-88; that stretch reads LAHDQQWLDHFVLYIITAVTIFVCLLLLICIVR. Over 89 to 103 the chain is Cytoplasmic; sequence FNRRANPVPARFTHN. Residues 104–134 form a helical membrane-spanning segment; that stretch reads TPIEVIWTLVPVLILVAIGAFSLPILFRSQE. The Periplasmic portion of the chain corresponds to 135-280; that stretch reads MPNDPDLVIK…WLAGAKEEFA (146 aa). The Cu cation site is built by His210, Cys245, Glu247, Cys249, His253, and Met256. Residues 281 to 298 constitute a propeptide, C-terminal propeptide; it reads ADASDYLPASPVKLASAE.

Belongs to the cytochrome c oxidase subunit 2 family. Binuclear copper center (CuA) serves as cofactor.

The protein resides in the cell inner membrane. It carries out the reaction 4 Fe(II)-[cytochrome c] + O2 + 8 H(+)(in) = 4 Fe(III)-[cytochrome c] + 2 H2O + 4 H(+)(out). Subunits I and II form the functional core of the enzyme complex. Electrons originating in cytochrome c are transferred via heme a and Cu(A) to the binuclear center formed by heme a3 and Cu(B). The polypeptide is Cytochrome c oxidase subunit 2 (ctaC) (Paracoccus denitrificans).